Reading from the N-terminus, the 544-residue chain is tRNA pseudouridine synthase 1 (544 aa).

Composition is skewed to basic and acidic residues over residues 1-10 and 31-61; these read MSEENLRPAY and RKADFDDEKDKKKDNDKHIDKRPKSGPRLDE. Positions 1 to 74 are disordered; that stretch reads MSEENLRPAY…PLPKEPRLPK (74 aa). The Nucleophile role is filled by aspartate 134. A disordered region spans residues 495-544; that stretch reads IPGLTDAPESNKKIKQRKRMEEEEAASKKAEISSTTQSNEPEVQPEAAAN. Basic and acidic residues predominate over residues 513–525; that stretch reads RMEEEEAASKKAE.

It belongs to the tRNA pseudouridine synthase TruA family. Zn(2+) is required as a cofactor.

It is found in the nucleus. It carries out the reaction a uridine in tRNA = a pseudouridine in tRNA. The catalysed reaction is uridine in snRNA = pseudouridine in snRNA. It catalyses the reaction a uridine in mRNA = a pseudouridine in mRNA. In terms of biological role, formation of pseudouridine at positions 27 and 28 in the anticodon stem and loop of transfer RNAs; at positions 34 and 36 of intron-containing precursor tRNA(Ile) and at position 35 in the intron-containing tRNA(Tyr). Catalyzes pseudouridylation at position 44 in U2 snRNA. Also catalyzes pseudouridylation of mRNAs. The polypeptide is tRNA pseudouridine synthase 1 (PUS1) (Saccharomyces cerevisiae (strain ATCC 204508 / S288c) (Baker's yeast)).